The chain runs to 395 residues: Imidazolonepropionase (395 aa).

Fe(3+) is bound by residues histidine 63 and histidine 65. Zn(2+) contacts are provided by histidine 63 and histidine 65. 4-imidazolone-5-propanoate is bound by residues arginine 72, tyrosine 135, and histidine 168. An N-formimidoyl-L-glutamate-binding site is contributed by tyrosine 135. Histidine 233 is a Fe(3+) binding site. Histidine 233 contacts Zn(2+). Glutamine 236 contributes to the 4-imidazolone-5-propanoate binding site. Aspartate 308 contacts Fe(3+). Aspartate 308 is a binding site for Zn(2+). Residues asparagine 310 and glycine 312 each contribute to the N-formimidoyl-L-glutamate site. Threonine 313 serves as a coordination point for 4-imidazolone-5-propanoate.

This sequence belongs to the metallo-dependent hydrolases superfamily. HutI family. The cofactor is Zn(2+). Fe(3+) is required as a cofactor.

It localises to the cytoplasm. The catalysed reaction is 4-imidazolone-5-propanoate + H2O = N-formimidoyl-L-glutamate. It participates in amino-acid degradation; L-histidine degradation into L-glutamate; N-formimidoyl-L-glutamate from L-histidine: step 3/3. In terms of biological role, catalyzes the hydrolytic cleavage of the carbon-nitrogen bond in imidazolone-5-propanoate to yield N-formimidoyl-L-glutamate. It is the third step in the universal histidine degradation pathway. The polypeptide is Imidazolonepropionase (Cereibacter sphaeroides (strain ATCC 17023 / DSM 158 / JCM 6121 / CCUG 31486 / LMG 2827 / NBRC 12203 / NCIMB 8253 / ATH 2.4.1.) (Rhodobacter sphaeroides)).